We begin with the raw amino-acid sequence, 203 residues long: NAD(P)H dehydrogenase (quinone) (203 aa).

Residues 3–194 (VLIPFYSMYG…AGARYQGKYI (192 aa)) form the Flavodoxin-like domain. FMN contacts are provided by residues 9–14 (SMYGHI) and 82–84 (TRF). An NAD(+)-binding site is contributed by Y11. W102 serves as a coordination point for substrate. FMN-binding positions include 117 to 123 (SSATQHG) and H138.

The protein belongs to the WrbA family. It depends on FMN as a cofactor.

It catalyses the reaction a quinone + NADH + H(+) = a quinol + NAD(+). The catalysed reaction is a quinone + NADPH + H(+) = a quinol + NADP(+). This is NAD(P)H dehydrogenase (quinone) from Geobacter metallireducens (strain ATCC 53774 / DSM 7210 / GS-15).